The following is a 376-amino-acid chain: Alpha-centractin (376 aa).

Met1 is subject to N-acetylmethionine.

Belongs to the actin family. ARP1 subfamily. In terms of assembly, part of the ACTR1A/ACTB filament around which the dynactin complex is built. The filament contains 8 copies of ACTR1A and 1 ACTB. Interacts with dynein and adapters such as BICD2. Interacts with BCCIP (isoform 2/alpha).

The protein localises to the cytoplasm. It is found in the cytoskeleton. It localises to the microtubule organizing center. The protein resides in the centrosome. Its subcellular location is the cell cortex. In terms of biological role, part of the ACTR1A/ACTB filament around which the dynactin complex is built. The dynactin multiprotein complex activates the molecular motor dynein for ultra-processive transport along microtubules. In Canis lupus familiaris (Dog), this protein is Alpha-centractin (ACTR1A).